We begin with the raw amino-acid sequence, 146 residues long: ALSAAEAEVVAKSWGPVFANKDANGDNFLIALFEAYPDSPNFFADFKGKSIADIRASPKLRNVSSRIVSRLNEFVSSAADAGKMAAMLDQFSKEHAGFGVGSQQFQNVSAMFPGFVASIAAPPAGADAAWGKLFGLIIDAMKKAGK.

A1 is subject to N-acetylalanine. A Globin domain is found at 1–146; sequence ALSAAEAEVV…IIDAMKKAGK (146 aa). H95 contacts heme b.

Belongs to the globin family. In terms of assembly, monomer.

In Dolabella auricularia (Shoulderblade sea cat), this protein is Globin.